The sequence spans 147 residues: Transcription antitermination protein NusB (147 aa).

This sequence belongs to the NusB family.

Functionally, involved in transcription antitermination. Required for transcription of ribosomal RNA (rRNA) genes. Binds specifically to the boxA antiterminator sequence of the ribosomal RNA (rrn) operons. The polypeptide is Transcription antitermination protein NusB (Legionella pneumophila (strain Paris)).